Reading from the N-terminus, the 151-residue chain is Putative pre-16S rRNA nuclease (151 aa).

It belongs to the YqgF nuclease family.

It localises to the cytoplasm. Functionally, could be a nuclease involved in processing of the 5'-end of pre-16S rRNA. This Chlamydia pneumoniae (Chlamydophila pneumoniae) protein is Putative pre-16S rRNA nuclease.